The chain runs to 162 residues: Crossover junction endodeoxyribonuclease RuvC (162 aa).

Catalysis depends on residues D7, E67, and D140. Mg(2+) contacts are provided by D7, E67, and D140.

Belongs to the RuvC family. Homodimer which binds Holliday junction (HJ) DNA. The HJ becomes 2-fold symmetrical on binding to RuvC with unstacked arms; it has a different conformation from HJ DNA in complex with RuvA. In the full resolvosome a probable DNA-RuvA(4)-RuvB(12)-RuvC(2) complex forms which resolves the HJ. The cofactor is Mg(2+).

It localises to the cytoplasm. It catalyses the reaction Endonucleolytic cleavage at a junction such as a reciprocal single-stranded crossover between two homologous DNA duplexes (Holliday junction).. Functionally, the RuvA-RuvB-RuvC complex processes Holliday junction (HJ) DNA during genetic recombination and DNA repair. Endonuclease that resolves HJ intermediates. Cleaves cruciform DNA by making single-stranded nicks across the HJ at symmetrical positions within the homologous arms, yielding a 5'-phosphate and a 3'-hydroxyl group; requires a central core of homology in the junction. The consensus cleavage sequence is 5'-(A/T)TT(C/G)-3'. Cleavage occurs on the 3'-side of the TT dinucleotide at the point of strand exchange. HJ branch migration catalyzed by RuvA-RuvB allows RuvC to scan DNA until it finds its consensus sequence, where it cleaves and resolves the cruciform DNA. This chain is Crossover junction endodeoxyribonuclease RuvC, found in Heliobacterium modesticaldum (strain ATCC 51547 / Ice1).